The sequence spans 60 residues: Cytotoxin 7 (60 aa).

4 disulfide bridges follow: Cys-3/Cys-21, Cys-14/Cys-38, Cys-42/Cys-53, and Cys-54/Cys-59.

Belongs to the three-finger toxin family. Short-chain subfamily. Type IA cytotoxin sub-subfamily. As to quaternary structure, monomer in solution; Homodimer and oligomer in the presence of negatively charged lipids forming a pore with a size ranging between 20 and 30 Angstroms. As to expression, expressed by the venom gland.

Its subcellular location is the secreted. The protein resides in the target cell membrane. Shows cytolytic activity on many different cells by forming pore in lipid membranes. In vivo, increases heart rate or kills the animal by cardiac arrest. In addition, it binds to heparin with high affinity, interacts with Kv channel-interacting protein 1 (KCNIP1) in a calcium-independent manner, and binds to integrin alpha-V/beta-3 (ITGAV/ITGB3) with moderate affinity. This chain is Cytotoxin 7, found in Naja annulifera (Banded Egyptian cobra).